Consider the following 326-residue polypeptide: UDP-N-acetylglucosamine transporter (326 aa).

The next 8 helical transmembrane spans lie at 8-24, 42-58, 138-154, 174-190, 210-226, 247-263, 269-285, and 296-312; these read LSLG…VLTM, AVVV…ILLV, VYQW…VAFV, FVGL…SGFA, IQLG…GVYI, IVVI…AAVI, ILKG…STLI, and TSVF…ATFL.

This sequence belongs to the nucleotide-sugar transporter family. SLC35A subfamily. In terms of assembly, interacts with SLC35A2; the interaction is reduced in the presence of SLC35A4. Found in a complex with SLC35A2 and SLC35A4.

The protein localises to the golgi apparatus membrane. Functionally, uridine diphosphate-N-acetylglucosamine (UDP-GlcNAc) transporter in the Golgi apparatus. May supply UDP-GlcNAc as substrate for Golgi-resident glycosyltransferases that generate branching of diantennary oligosaccharides. The chain is UDP-N-acetylglucosamine transporter (SLC35A3) from Canis lupus familiaris (Dog).